Consider the following 455-residue polypeptide: MFS-type transporter SLC18B1 (455 aa).

The residue at position 1 (Met1) is an N-acetylmethionine. The segment at 1–26 is disordered; the sequence is MDTAGPPAPAGTEGDGPGGSTGETSR. Over 1–32 the chain is Cytoplasmic; sequence MDTAGPPAPAGTEGDGPGGSTGETSRRLSKEQ. Residue Ser20 is modified to Phosphoserine. A helical membrane pass occupies residues 33 to 53; it reads IFVLVSAASMNLGCMMTYSIL. Over 54 to 69 the chain is Extracellular; the sequence is GPFFPKEAEKKGASNT. A helical transmembrane segment spans residues 70 to 90; sequence TIGMIFGCYALFELLASLVFG. Over 91 to 99 the chain is Cytoplasmic; sequence KYLVHIGAK. The helical transmembrane segment at 100–120 threads the bilayer; it reads FMFIAGMFVSGGVTILFGVLD. Residues 121–126 lie on the Extracellular side of the membrane; the sequence is QLPEGP. The helical transmembrane segment at 127–147 threads the bilayer; sequence IFIAMCFLVRIVDAIGFGAAI. Over 148-166 the chain is Cytoplasmic; it reads TASSSILAKAFPNNVATVM. A helical membrane pass occupies residues 167–187; sequence GSLEVFSGLGLVAGPPLGGLL. At 188 to 194 the chain is on the extracellular side; the sequence is YQSFGYE. The helical transmembrane segment at 195–215 threads the bilayer; that stretch reads VPFIFLGCIVLLMIPLNLCIL. Residues 216-232 are Cytoplasmic-facing; sequence PSYESDAGKQSFWKLVT. A helical transmembrane segment spans residues 233–253; the sequence is LPKIGLIAFVIISLSSCFGFL. Topologically, residues 254–271 are extracellular; that stretch reads DPTLSLFVMKKFSLSTGY. The chain crosses the membrane as a helical span at residues 272-292; sequence VGLVFLGLSLSYAISSPLFGL. The Cytoplasmic portion of the chain corresponds to 293-303; sequence LSDKMPNLRKW. The chain crosses the membrane as a helical span at residues 304–324; it reads FLVFGNLITAGCYMLLGPIPL. Residues 325–330 lie on the Extracellular side of the membrane; it reads LHIKSQ. A helical membrane pass occupies residues 331–351; the sequence is LWLLVLVLVINGVSAGMSIIP. At 352–376 the chain is on the cytoplasmic side; the sequence is TFPEMLSCAYANGFEDGISTLGLVS. Residues 377-397 form a helical membrane-spanning segment; it reads GLFGAMWSVGAFMGPILGGFL. The Extracellular portion of the chain corresponds to 398–406; the sequence is CEKIGFEWA. A helical transmembrane segment spans residues 407-427; sequence AAIQGLWTLLSGVAMALFYLW. Over 428 to 455 the chain is Cytoplasmic; that stretch reads EDSTMRRSKAQNILGTEEEQAALLPNDT.

In terms of tissue distribution, expressed in brain structures, particularly in hippocampus, cortex, and cerebellum (at protein level). Expressed in astrocytes and hippocampal neurons (at protein level). Expressed in peritoneal mast cells.

It is found in the cytoplasmic vesicle. The protein resides in the secretory vesicle membrane. Its subcellular location is the secretory vesicle. It localises to the synaptic vesicle membrane. It carries out the reaction spermine(in) + n H(+)(out) = spermine(out) + n H(+)(in). The catalysed reaction is spermidine(in) + n H(+)(out) = spermidine(out) + n H(+)(in). It catalyses the reaction serotonin(in) + n H(+)(out) = serotonin(out) + n H(+)(in). Proton-coupled polyamine antiporter involved in the translocation of polyamines from cytosol into secretory vesicles prior to their release via exocytosis. Uses the electrochemical proton gradient generated by a V-type proton-pumping ATPase to couple the efflux of protons with the uptake of a polyamine molecule. Facilitates vesicular storage of spermine and spermidine in astrocytes with an impact on glutamatergic neuronal transmission and memory formation. Upon antigen stimulation, regulates polyamine accumulation and release in mast cell secretory granules, which in turn potentiates mast cell degranulation and histamine secretion. The chain is MFS-type transporter SLC18B1 from Rattus norvegicus (Rat).